Here is a 396-residue protein sequence, read N- to C-terminus: METYDVLVVGGGPGGSTAARYAAKYGLKTLMIEKRPEIGSPVRCGEGLSKGILNEADIKADRSFIANEVKGARIYGPSEKRPIILQSEKAGNEVGYVLERDKFDKHLAALAAKAGADVWVKSPALGVIKENGKVAGAKIRHNNEIVDVRAKMVIAADGFESEFGRWAGLKSVILARNDIISALQYRMINVDVDPDYTDFYLGSIAPAGYIWVFPKGEGMANVGIGSSINWIHNRFELKNYLDRFIENHPGLKKGQDIQLVTGGVSVSKVKMPITMPGLMLVGDAARLIDPITGGGIANAIVSGMYAAQVTKEAIESNDYSPQMMQKYEKLIKERFERKHLRNWVAKEKLAMLSDDTLDKLVDIVSEQVLTTISVEAILKAIAEKYPEVVKELEDLI.

FAD-binding residues include Gly14, Glu33, Cys44, Gly45, Gly47, Arg100, Ala124, Glu162, Asp283, Gly295, and Ile296. Residues Lys338 and Val374 each coordinate a 2,3-bis-O-(geranylgeranyl)-sn-glycerol 1-phospholipid.

Belongs to the geranylgeranyl reductase family. DGGGPL reductase subfamily. In terms of assembly, monomer. FAD is required as a cofactor.

The protein resides in the cell membrane. It catalyses the reaction 2,3-bis-O-(phytanyl)-sn-glycerol 1-phosphate + 8 NADP(+) = 2,3-bis-O-(geranylgeranyl)-sn-glycerol 1-phosphate + 8 NADPH + 8 H(+). The catalysed reaction is 2,3-bis-O-(phytanyl)-sn-glycerol 1-phosphate + 8 NAD(+) = 2,3-bis-O-(geranylgeranyl)-sn-glycerol 1-phosphate + 8 NADH + 8 H(+). The enzyme catalyses a 2,3-bis-O-phytanyl-sn-glycerol 1-phospholipid + 8 A = a 2,3-bis-O-(geranylgeranyl)-sn-glycerol 1-phospholipid + 8 AH2. It carries out the reaction CDP-2,3-bis-O-(geranylgeranyl)-sn-glycerol + 8 AH2 = CDP-2,3-bis-O-(phytanyl)-sn-glycerol + 8 A. It catalyses the reaction archaetidylserine + 8 AH2 = 2,3-bis-O-phytanyl-sn-glycero-3-phospho-L-serine + 8 A. It functions in the pathway membrane lipid metabolism; glycerophospholipid metabolism. Functionally, is involved in the reduction of 2,3-digeranylgeranylglycerophospholipids (unsaturated archaeols) into 2,3-diphytanylglycerophospholipids (saturated archaeols) in the biosynthesis of archaeal membrane lipids. Catalyzes the formation of archaetidic acid (2,3-di-O-phytanyl-sn-glyceryl phosphate) from 2,3-di-O-geranylgeranylglyceryl phosphate (DGGGP) via the hydrogenation of each double bond of the isoprenoid chains. Can use both NADH and NADPH as electron donors. Also catalyzes the reduction of 2,3-di-O-geranylgeranylglyceryl phosphate analogs such as 2,3-di-O-phytyl-sn-glyceryl phosphate (DPHGP), 3-O-(2,3-di-O-phytyl-sn-glycero-phospho)-sn-glycerol (DPHGPG) and 2,3-di-O-phytyl-sn-glycero-phosphoethanolamine (DPHGPE). Is not active toward 2,3-di-O-geranylgeranylglycerol. Is also probably able to reduce double bonds of geranyl groups in CDP-2,3-bis-O-(geranylgeranyl)-sn-glycerol and archaetidylserine, thus acting at various stages in the biosynthesis of archaeal membrane lipids. This is Digeranylgeranylglycerophospholipid reductase from Thermoplasma acidophilum (strain ATCC 25905 / DSM 1728 / JCM 9062 / NBRC 15155 / AMRC-C165).